The following is a 117-amino-acid chain: Pre-mRNA-splicing factor ini1 (117 aa).

This sequence belongs to the PHF5 family.

It localises to the nucleus. Required for pre-mRNA splicing. The sequence is that of Pre-mRNA-splicing factor ini1 (ini1) from Schizosaccharomyces pombe (strain 972 / ATCC 24843) (Fission yeast).